A 525-amino-acid polypeptide reads, in one-letter code: MTQQTSQKHNPVLVVDFGAQYAQLIARRVREANIYSEVVPHTATVEEIKAKNPAALILSGGPSSVYADGAPSLDPQVLELGIPVFGICYGFQAMTHALGGTVANTGNREYGRTEMTVDGGILHADLEETHKVWMSHGDAVSVAPEGFVVTAHSEGAPVAAFECAEKRMAGVQYHPEVLHSPHGQEVMVRFLTEIAGLEQNWTAANIAEELIDAVCAQVGPEGRAICGLSGGVDSAVAAALVQRAIGDRLTCVFVDHGLLRAGEREQVQTDFVAATGAKLVTVDEREAFLNKLAGVTEPEAKRKAIGAEFIRSFERAVAGILDDAPEGSTVDFLVQGTLYPDVVESGGGSGTANIKSHHNVGGLPDDVEFQLVEPLRLLFKDEVRAVGRELGLPEEIVNRQPFPGPGLGIRIIGEVTEERLETLRAADLIARTELTAAGLDSEIWQCPVVLLADVRSVGVQGDGRTYGHPIVLRPVSSEDAMTADWTRLPYDVLEKISTRITNEVSDVNRVVLDCTSKPPGTIEWE.

Positions 11 to 200 (PVLVVDFGAQ…LTEIAGLEQN (190 aa)) constitute a Glutamine amidotransferase type-1 domain. The active-site Nucleophile is Cys-88. Residues His-174 and Glu-176 contribute to the active site. One can recognise a GMPS ATP-PPase domain in the interval 201 to 399 (WTAANIAEEL…LGLPEEIVNR (199 aa)). Position 229 to 235 (229 to 235 (SGGVDSA)) interacts with ATP.

Homodimer.

The enzyme catalyses XMP + L-glutamine + ATP + H2O = GMP + L-glutamate + AMP + diphosphate + 2 H(+). Its pathway is purine metabolism; GMP biosynthesis; GMP from XMP (L-Gln route): step 1/1. In terms of biological role, catalyzes the synthesis of GMP from XMP. The chain is GMP synthase [glutamine-hydrolyzing] from Corynebacterium diphtheriae (strain ATCC 700971 / NCTC 13129 / Biotype gravis).